Consider the following 149-residue polypeptide: Deoxyuridine 5'-triphosphate nucleotidohydrolase (149 aa).

Residues 68–70, N81, and 85–87 contribute to the substrate site; these read RSG and LID.

This sequence belongs to the dUTPase family. Requires Mg(2+) as cofactor.

The catalysed reaction is dUTP + H2O = dUMP + diphosphate + H(+). Its pathway is pyrimidine metabolism; dUMP biosynthesis; dUMP from dCTP (dUTP route): step 2/2. Its function is as follows. This enzyme is involved in nucleotide metabolism: it produces dUMP, the immediate precursor of thymidine nucleotides and it decreases the intracellular concentration of dUTP so that uracil cannot be incorporated into DNA. The sequence is that of Deoxyuridine 5'-triphosphate nucleotidohydrolase from Aromatoleum aromaticum (strain DSM 19018 / LMG 30748 / EbN1) (Azoarcus sp. (strain EbN1)).